We begin with the raw amino-acid sequence, 729 residues long: MAKSVVIAEKPSVARDIARVLKCDKKGNGYLEGSKYIVTWALGHLVTLADPESYDVKYKKWNLEDLPMLPERLKLTVIKQTGKQFNAVKSQLLRKDVNEIIVATDAGREGELVARWIIDKVRINKPIKRLWISSVTDKAIKDGFANLKPGKAYDNLYASAVARSEADWYIGLNATRALTTRFNAQLNCGRVQTPTVAMIANREDEIKNFKAQTYYGIEAQTTNQLKLTWQDANGNSRSFNKEKIDGIVKGLDKHNATVLEIDKKQKKSFSPGLYDLTELQRDANKKFGYSAKETLNIMQKLYEQHKVLTYPRTDSRYISSDIVGTLPERLKACGVGEYRPLAHKVLQKPIKANKSFVDDSKVSDHHAIIPTEGYVNFSAFTDKERKIYDLVVKRFLAVLFPAFEYEQLTLRTKVGNETFIARGKTILHAGWKEVYENRFEDDDVTDDVKEQLLPRIEKGDTLTVKLIMQTSGQTKAPARFNEATLLSAMENPTKYMDTQNKQLADTLKSTGGLGTVATRADIIDKLFNSFLIEKRGKDIHITSKGRQLLDLVPEELKSPTLTGEWEQKLEAIAKGKLKKEVFISEMKNYTKEIVSEIKSSDKKYKHDNISTKSCPDCGKPMLEVNGKKGKMLVCQDRECGHRKNVSRTTNARCPQCKKKLELRGEGAGQIFACKCGYREKLSTFQERRKKESGNKADKRDVQKYMKQQKKEEEPLNNPFAEALKKLKFD.

Residues 3–136 (KSVVIAEKPS…IKRLWISSVT (134 aa)) enclose the Toprim domain. Residues Glu9 and Asp105 each coordinate Mg(2+). The region spanning 153–594 (YDNLYASAVA…EMKNYTKEIV (442 aa)) is the Topo IA-type catalytic domain. Residues 187–192 (NCGRVQ) form an interaction with DNA region. Catalysis depends on Tyr310, which acts as the O-(5'-phospho-DNA)-tyrosine intermediate. The span at 686–713 (ERRKKESGNKADKRDVQKYMKQQKKEEE) shows a compositional bias: basic and acidic residues. A disordered region spans residues 686–718 (ERRKKESGNKADKRDVQKYMKQQKKEEEPLNNP).

It belongs to the type IA topoisomerase family. Requires Mg(2+) as cofactor.

It catalyses the reaction ATP-independent breakage of single-stranded DNA, followed by passage and rejoining.. Releases the supercoiling and torsional tension of DNA, which is introduced during the DNA replication and transcription, by transiently cleaving and rejoining one strand of the DNA duplex. Introduces a single-strand break via transesterification at a target site in duplex DNA. The scissile phosphodiester is attacked by the catalytic tyrosine of the enzyme, resulting in the formation of a DNA-(5'-phosphotyrosyl)-enzyme intermediate and the expulsion of a 3'-OH DNA strand. The free DNA strand then undergoes passage around the unbroken strand, thus removing DNA supercoils. Finally, in the religation step, the DNA 3'-OH attacks the covalent intermediate to expel the active-site tyrosine and restore the DNA phosphodiester backbone. The sequence is that of DNA topoisomerase 3 from Bacillus thuringiensis subsp. konkukian (strain 97-27).